Reading from the N-terminus, the 381-residue chain is 8-amino-7-oxononanoate synthase (381 aa).

Arg27 lines the substrate pocket. 105-106 (GY) is a binding site for pyridoxal 5'-phosphate. His130 is a binding site for substrate. Pyridoxal 5'-phosphate-binding positions include Ser176, 201 to 204 (DEAH), and 232 to 235 (TLSK). N6-(pyridoxal phosphate)lysine is present on Lys235. Residue Thr345 participates in substrate binding.

The protein belongs to the class-II pyridoxal-phosphate-dependent aminotransferase family. BioF subfamily. As to quaternary structure, homodimer. Pyridoxal 5'-phosphate is required as a cofactor.

It catalyses the reaction 6-carboxyhexanoyl-[ACP] + L-alanine + H(+) = (8S)-8-amino-7-oxononanoate + holo-[ACP] + CO2. Its pathway is cofactor biosynthesis; biotin biosynthesis. In terms of biological role, catalyzes the decarboxylative condensation of pimeloyl-[acyl-carrier protein] and L-alanine to produce 8-amino-7-oxononanoate (AON), [acyl-carrier protein], and carbon dioxide. This chain is 8-amino-7-oxononanoate synthase, found in Mycolicibacterium paratuberculosis (strain ATCC BAA-968 / K-10) (Mycobacterium paratuberculosis).